Here is a 295-residue protein sequence, read N- to C-terminus: Taste receptor type 2 member 120 (295 aa).

At 1–5 (MDLTE) the chain is on the extracellular side. Residues 6–26 (WIVTIIMMIEFLLGNCANFFI) form a helical membrane-spanning segment. The Cytoplasmic portion of the chain corresponds to 27–45 (MVVNAIDCMKRRKISSADR). The chain crosses the membrane as a helical span at residues 46 to 66 (IITALAISRIGLLWAMLMNWH). At 67-83 (SRVYTTDTYSFQVTAFS) the chain is on the extracellular side. A helical transmembrane segment spans residues 84–104 (GIIWAITNHFTTWLGTILSMF). The Cytoplasmic segment spans residues 105–125 (YLFKIANFSNCLFLHLKRKLD). The chain crosses the membrane as a helical span at residues 126–146 (SVLLVIFLVSSLLVFAYLGVV). The Extracellular segment spans residues 147-177 (NIKKIAWLSVHEGNVTVKSKLMNIASIRDTL). The N-linked (GlcNAc...) asparagine glycan is linked to N160. A helical transmembrane segment spans residues 178–198 (LFSLINIAPFGISLTCVLLLI). Residues 199-230 (YSLGKHLKNMKFYGKGCQDQSTMVHIRALQTV) lie on the Cytoplasmic side of the membrane. Residues 231–251 (VSFLLLYATYSSCVIISGWSI) form a helical membrane-spanning segment. Residues 252 to 255 (QNVP) lie on the Extracellular side of the membrane. The helical transmembrane segment at 256 to 276 (IFLFCVTIGAFYPAGHSCILI) threads the bilayer. Topologically, residues 277 to 295 (WGNQKLKQFLLLFLRQMKC) are cytoplasmic.

The protein belongs to the G-protein coupled receptor T2R family.

Its subcellular location is the membrane. In terms of biological role, putative taste receptor which may play a role in the perception of bitterness. The polypeptide is Taste receptor type 2 member 120 (Rattus norvegicus (Rat)).